A 367-amino-acid polypeptide reads, in one-letter code: Small ribosomal subunit biogenesis GTPase RsgA (367 aa).

The region spanning 112-267 (AEQVLATNVD…VIDTPGLREL (156 aa)) is the CP-type G domain. GTP contacts are provided by residues 157–160 (NKSD) and 209–217 (GSSGAGKST). Zn(2+) is bound by residues Cys291, Cys296, His298, and Cys304.

This sequence belongs to the TRAFAC class YlqF/YawG GTPase family. RsgA subfamily. In terms of assembly, monomer. Associates with 30S ribosomal subunit, binds 16S rRNA. Zn(2+) serves as cofactor.

The protein resides in the cytoplasm. Functionally, one of several proteins that assist in the late maturation steps of the functional core of the 30S ribosomal subunit. Helps release RbfA from mature subunits. May play a role in the assembly of ribosomal proteins into the subunit. Circularly permuted GTPase that catalyzes slow GTP hydrolysis, GTPase activity is stimulated by the 30S ribosomal subunit. This Opitutus terrae (strain DSM 11246 / JCM 15787 / PB90-1) protein is Small ribosomal subunit biogenesis GTPase RsgA.